A 160-amino-acid polypeptide reads, in one-letter code: Deoxyuridine 5'-triphosphate nucleotidohydrolase (160 aa).

DUMP contacts are provided by serine 80, glycine 93, aspartate 96, tyrosine 99, lysine 104, arginine 149, phenylalanine 154, and glycine 155.

The protein belongs to the dUTPase family. In terms of assembly, homotrimer. The cofactor is Mg(2+).

It catalyses the reaction dUTP + H2O = dUMP + diphosphate + H(+). Its pathway is pyrimidine metabolism; dUMP biosynthesis; dUMP from dCTP (dUTP route): step 2/2. In terms of biological role, involved in nucleotide metabolism via production of dUMP, the immediate precursor of thymidine nucleotides, and decreases the intracellular concentration of dUTP so that uracil cannot be incorporated into DNA. The polypeptide is Deoxyuridine 5'-triphosphate nucleotidohydrolase (DUT1) (Debaryomyces hansenii (strain ATCC 36239 / CBS 767 / BCRC 21394 / JCM 1990 / NBRC 0083 / IGC 2968) (Yeast)).